A 320-amino-acid chain; its full sequence is MRQTKTGILLANLGTPDAPTPEAVKRYLKQFLSDRRVVDTPRLLWWPLLRGVILPLRSPRVAKLYQSIWMDGGSPLMVYSREQQQALAARLPDTPVALGMSYGSPSLESAVDELLASDVDHIVVLPLYPQYSCSTVGAVWDELGRILARKRRIPGISFIRDYADDGAYIDALAKSARESFARHGEPDVLLLSYHGIPQRYADEGDDYPQRCRDTTRELVSALGLPPEKVMMTFQSRFGREPWLTPYTDETLKMLGEKGTGHIQVMCPGFAADCLETLEEIAEQNREIFLEAGGKKYAYIPALNATPEHIDMMLKLTAPYR.

Residues H194 and E275 each contribute to the Fe cation site.

This sequence belongs to the ferrochelatase family. Monomer.

The protein resides in the cytoplasm. The enzyme catalyses heme b + 2 H(+) = protoporphyrin IX + Fe(2+). Its pathway is porphyrin-containing compound metabolism; protoheme biosynthesis; protoheme from protoporphyrin-IX: step 1/1. Its function is as follows. Catalyzes the ferrous insertion into protoporphyrin IX. In Salmonella agona (strain SL483), this protein is Ferrochelatase.